Reading from the N-terminus, the 305-residue chain is Phospho-N-acetylmuramoyl-pentapeptide-transferase (305 aa).

Transmembrane regions (helical) follow at residues methionine 1–lysine 21, alanine 46–glycine 66, glutamate 73–leucine 93, phenylalanine 113–histidine 133, leucine 139–phenylalanine 159, isoleucine 174–leucine 194, valine 207–leucine 227, leucine 233–isoleucine 253, and valine 282–glycine 302.

Belongs to the glycosyltransferase 4 family. MraY subfamily. It depends on Mg(2+) as a cofactor.

The protein localises to the cell membrane. The enzyme catalyses UDP-N-acetyl-alpha-D-muramoyl-L-alanyl-gamma-D-glutamyl-meso-2,6-diaminopimeloyl-D-alanyl-D-alanine + di-trans,octa-cis-undecaprenyl phosphate = di-trans,octa-cis-undecaprenyl diphospho-N-acetyl-alpha-D-muramoyl-L-alanyl-D-glutamyl-meso-2,6-diaminopimeloyl-D-alanyl-D-alanine + UMP. The protein operates within cell wall biogenesis; peptidoglycan biosynthesis. Its function is as follows. Catalyzes the initial step of the lipid cycle reactions in the biosynthesis of the cell wall peptidoglycan: transfers peptidoglycan precursor phospho-MurNAc-pentapeptide from UDP-MurNAc-pentapeptide onto the lipid carrier undecaprenyl phosphate, yielding undecaprenyl-pyrophosphoryl-MurNAc-pentapeptide, known as lipid I. This chain is Phospho-N-acetylmuramoyl-pentapeptide-transferase, found in Deinococcus deserti (strain DSM 17065 / CIP 109153 / LMG 22923 / VCD115).